Reading from the N-terminus, the 65-residue chain is Large ribosomal subunit protein bL31 (65 aa).

The Zn(2+) site is built by Cys-16, Cys-18, Cys-36, and Cys-39.

This sequence belongs to the bacterial ribosomal protein bL31 family. Type A subfamily. In terms of assembly, part of the 50S ribosomal subunit. Zn(2+) is required as a cofactor.

Its function is as follows. Binds the 23S rRNA. This chain is Large ribosomal subunit protein bL31, found in Desulfitobacterium hafniense (strain DSM 10664 / DCB-2).